Here is a 415-residue protein sequence, read N- to C-terminus: Serine hydroxymethyltransferase (415 aa).

(6S)-5,6,7,8-tetrahydrofolate contacts are provided by residues leucine 121 and glycine 125–leucine 127. Lysine 230 is modified (N6-(pyridoxal phosphate)lysine). Serine 355–phenylalanine 357 provides a ligand contact to (6S)-5,6,7,8-tetrahydrofolate.

This sequence belongs to the SHMT family. Homodimer. Pyridoxal 5'-phosphate serves as cofactor.

It is found in the cytoplasm. It catalyses the reaction (6R)-5,10-methylene-5,6,7,8-tetrahydrofolate + glycine + H2O = (6S)-5,6,7,8-tetrahydrofolate + L-serine. It functions in the pathway one-carbon metabolism; tetrahydrofolate interconversion. Its pathway is amino-acid biosynthesis; glycine biosynthesis; glycine from L-serine: step 1/1. Catalyzes the reversible interconversion of serine and glycine with tetrahydrofolate (THF) serving as the one-carbon carrier. This reaction serves as the major source of one-carbon groups required for the biosynthesis of purines, thymidylate, methionine, and other important biomolecules. Also exhibits THF-independent aldolase activity toward beta-hydroxyamino acids, producing glycine and aldehydes, via a retro-aldol mechanism. In Lactococcus lactis subsp. cremoris (strain SK11), this protein is Serine hydroxymethyltransferase.